The sequence spans 228 residues: ATP-dependent dethiobiotin synthetase BioD (228 aa).

12 to 17 (EIGKTT) contributes to the ATP binding site. Threonine 16 serves as a coordination point for Mg(2+). The active site involves lysine 37. Substrate is bound at residue serine 41. Residues aspartate 54, 116–119 (EGAG), and 205–207 (PRL) each bind ATP. Mg(2+) contacts are provided by aspartate 54 and glutamate 116.

This sequence belongs to the dethiobiotin synthetase family. In terms of assembly, homodimer. Requires Mg(2+) as cofactor.

The protein localises to the cytoplasm. The catalysed reaction is (7R,8S)-7,8-diammoniononanoate + CO2 + ATP = (4R,5S)-dethiobiotin + ADP + phosphate + 3 H(+). It functions in the pathway cofactor biosynthesis; biotin biosynthesis; biotin from 7,8-diaminononanoate: step 1/2. In terms of biological role, catalyzes a mechanistically unusual reaction, the ATP-dependent insertion of CO2 between the N7 and N8 nitrogen atoms of 7,8-diaminopelargonic acid (DAPA, also called 7,8-diammoniononanoate) to form a ureido ring. This Pseudomonas paraeruginosa (strain DSM 24068 / PA7) (Pseudomonas aeruginosa (strain PA7)) protein is ATP-dependent dethiobiotin synthetase BioD.